The following is an 84-amino-acid chain: Small ribosomal subunit protein bS20 (84 aa).

It belongs to the bacterial ribosomal protein bS20 family.

Its function is as follows. Binds directly to 16S ribosomal RNA. The polypeptide is Small ribosomal subunit protein bS20 (Ligilactobacillus salivarius (strain UCC118) (Lactobacillus salivarius)).